The sequence spans 544 residues: Flagellar hook-associated protein 1 (544 aa).

This sequence belongs to the flagella basal body rod proteins family.

Its subcellular location is the secreted. It is found in the bacterial flagellum. The sequence is that of Flagellar hook-associated protein 1 (flgK) from Buchnera aphidicola subsp. Schizaphis graminum (strain Sg).